The chain runs to 683 residues: uncharacterized protein (683 aa).

The next 14 helical transmembrane spans lie at 12 to 32 (LLLY…MMGL), 41 to 61 (LWLG…IGLI), 84 to 104 (MAIA…GILF), 110 to 130 (GLAY…LLAP), 162 to 182 (IAVL…IQGV), 194 to 214 (FAVG…LGGM), 221 to 241 (QVAQ…MIAW), 377 to 397 (LNFV…PHIL), 413 to 433 (VAWA…LAAL), 495 to 515 (IAGL…AAAL), 548 to 568 (VTTA…VTSL), 573 to 593 (ILFL…PVLV), 603 to 623 (AAGA…YIIV), and 645 to 665 (IASG…VSLL).

This sequence belongs to the sodium:solute symporter (SSF) (TC 2.A.21) family.

The protein resides in the cell membrane. This is an uncharacterized protein from Cupriavidus necator (strain ATCC 17699 / DSM 428 / KCTC 22496 / NCIMB 10442 / H16 / Stanier 337) (Ralstonia eutropha).